The chain runs to 172 residues: Fimbrial-like protein FimF (172 aa).

The signal sequence occupies residues 1–21 (MILRRVFIAIGCVLFSPLSQA). Cys41 and Cys81 form a disulfide bridge.

The protein belongs to the fimbrial protein family.

The protein resides in the fimbrium. In Salmonella typhimurium (strain LT2 / SGSC1412 / ATCC 700720), this protein is Fimbrial-like protein FimF (fimF).